The primary structure comprises 145 residues: Large ribosomal subunit protein uL11 (145 aa).

It belongs to the universal ribosomal protein uL11 family. In terms of assembly, part of the ribosomal stalk of the 50S ribosomal subunit. Interacts with L10 and the large rRNA to form the base of the stalk. L10 forms an elongated spine to which L12 dimers bind in a sequential fashion forming a multimeric L10(L12)X complex. Post-translationally, one or more lysine residues are methylated.

Its function is as follows. Forms part of the ribosomal stalk which helps the ribosome interact with GTP-bound translation factors. The chain is Large ribosomal subunit protein uL11 from Rickettsia peacockii (strain Rustic).